The sequence spans 403 residues: MTLPPVYIVSTARTPIGSFQGSLSSLTYSDLGAHAVKAALAKVPQIKPQDVDEIVFGGVLQANVGQAPARQVALKAGLPDSIIASTINKVCASGMKAVIIGAQNIICGTSDIVVVGGAESMSNTPYYLPSARSGARYGDAVMVDGVQKDGLLDVYEEKLMGVAAEKCAKDHGFSREDQDNFAINSYKKAGKALSEGKFKSEIAPVTIKGFRGKPDTVIENDEEIGKFNEDRLKSARTVFQKENGTVTAPNASKLNDGGAALVLVSEAKLKQLGLKPLAKISGWGEAARTPFDFTIAPALAVPKAVKHAGLTVDRVDFFELNEAFSVVGLANAELVKIPLEKLNVYGGAVAMGHPLGCSGARIIVTLLSVLTQEGGRFGAAGVCNGGGGASAIVIEKIDSDAKL.

Cys-91 functions as the Acyl-thioester intermediate in the catalytic mechanism. Active-site proton acceptor residues include His-353 and Cys-383. The short motif at Ala-401–Leu-403 is the Microbody targeting signal element.

Belongs to the thiolase-like superfamily. Thiolase family. Multimeric.

The protein resides in the peroxisome. The catalysed reaction is 2 acetyl-CoA = acetoacetyl-CoA + CoA. It functions in the pathway metabolic intermediate biosynthesis; (R)-mevalonate biosynthesis; (R)-mevalonate from acetyl-CoA: step 1/3. This is Acetyl-CoA acetyltransferase IB (PACTB) from Candida tropicalis (Yeast).